The chain runs to 551 residues: Enhancer of mRNA-decapping protein 3 (551 aa).

Residues 1–63 (MSQFVGFGVQ…LKDLKVLTVA (63 aa)) enclose the Sm domain. Residues 64–92 (SQSGKRKQQRQQQQQNDYNQNRGEHIDWQ) are disordered. One can recognise a DFDF domain in the interval 93 to 129 (DDDVSKIKQQEDFDFQRNLGMFNKKDVFAQLKQNDDI). 2 positions are modified to phosphoserine: S257 and S261. Residues 288–527 (VQLLEMESIT…DIGIPQGAYS (240 aa)) enclose the YjeF N-terminal domain.

This sequence belongs to the EDC3 family. In terms of assembly, homodimer. Interacts with DCP2.

The protein localises to the cytoplasm. It is found in the P-body. In terms of biological role, stimulates decapping of both stable and unstable mRNA during mRNA decay. Does not affect nonsense-mediated mRNA decay. Required for normal P-body assembly. The polypeptide is Enhancer of mRNA-decapping protein 3 (EDC3) (Saccharomyces cerevisiae (strain ATCC 204508 / S288c) (Baker's yeast)).